The sequence spans 748 residues: tRNA endonuclease ANKZF1 (748 aa).

The C2H2-type zinc finger occupies 96 to 120 (LFCSACDQIFQNHQEQREHYKLDWH). A disordered region spans residues 135–185 (SASDFEQQSSTGDLSSISGSDDTDSSSEEDLLPLDEGRAESEKPNRPPGFY). Low complexity predominate over residues 143–154 (SSTGDLSSISGS). Positions 155-167 (DDTDSSSEEDLLP) are enriched in acidic residues. Residues 169-179 (DEGRAESEKPN) show a composition bias toward basic and acidic residues. Residues 227-370 (GPRYYVVLMA…QRVLHKLTTL (144 aa)) enclose the VLRF1 domain. Gln-270 is an active-site residue. Ser-282 and Ser-385 each carry phosphoserine. Over residues 383–408 (FHSPETHWKPVREERKKDTEKEKTKV) the composition is skewed to basic and acidic residues. Disordered stretches follow at residues 383 to 438 (FHSP…SEVE) and 460 to 497 (RRRRRKKKERSQEQQCGAHGPLPQQPQDEPFSQPTQEV). A compositionally biased stretch (acidic residues) spans 429–438 (SQEEDGSEVE). Over residues 484 to 497 (QPQDEPFSQPTQEV) the composition is skewed to polar residues. The ANK 1 repeat unit spans residues 515–545 (ELWDTLLAACRAGEVEVLKLQLATGLVDPGV). Ser-555 bears the Phosphoserine mark. The stretch at 556–585 (GGFTLLHAAAAAGRGLVVRLLLEAGADPTV) is one ANK 2 repeat. The interval 621–677 (KARVPGPLTQEMEARQATRKKEQKAARRQREQQQRKQREQEEQEQEEQRRFAALSDR) is disordered. Residues 628-681 (LTQEMEARQATRKKEQKAARRQREQQQRKQREQEEQEQEEQRRFAALSDREKRA) adopt a coiled-coil conformation. The residue at position 629 (Thr-629) is a Phosphothreonine. Over residues 632–677 (MEARQATRKKEQKAARRQREQQQRKQREQEEQEQEEQRRFAALSDR) the composition is skewed to basic and acidic residues. The interval 654–666 (QRKQREQEEQEQE) is VCP/p97-interacting motif (VIM). Residue Ser-702 is modified to Phosphoserine.

The protein belongs to the ANKZF1/VMS1 family. As to quaternary structure, interacts (via VIM motif) with VCP.

The protein localises to the cytoplasm. Endonuclease that cleaves polypeptidyl-tRNAs downstream of the ribosome-associated quality control (RQC) pathway to release incompletely synthesized polypeptides for degradation. The RQC pathway disassembles aberrantly stalled translation complexes to recycle or degrade the constituent parts. ANKZF1 acts downstream disassembly of stalled ribosomes and specifically cleaves off the terminal 3'-CCA nucleotides universal to all tRNAs from polypeptidyl-tRNAs, releasing (1) ubiquitinated polypeptides from 60S ribosomal subunit for degradation and (2) cleaved tRNAs. ANKZF1-cleaved tRNAs are then repaired and recycled by ELAC1 and TRNT1. Also plays a role in the cellular response to hydrogen peroxide and in the maintenance of mitochondrial integrity under conditions of cellular stress. The sequence is that of tRNA endonuclease ANKZF1 from Mus musculus (Mouse).